A 563-amino-acid chain; its full sequence is Forkhead box protein O (563 aa).

Disordered stretches follow at residues 1-72 (MDDF…DPQQ) and 177-243 (KSVR…SYQL). Thr-43 is subject to Phosphothreonine; by PKB/AKT1. Over residues 58–72 (TKASNQQLANGDPQQ) the composition is skewed to polar residues. Positions 90–196 (WGNLSYADLI…ETSRYEKRRG (107 aa)) form a DNA-binding region, fork-head. The residue at position 185 (Ser-185) is a Phosphoserine; by PKB/AKT1. The span at 216–225 (ATPSPSSSVS) shows a compositional bias: polar residues. A Phosphoserine; by PKB/AKT1 modification is found at Ser-253. 3 positions are modified to phosphoserine: Ser-256, Ser-257, and Ser-262. The segment at 317–371 (AASGLPTQPPPPYQPPQHPQHTQGYALNGPGLSPNSVTTTMSPAYPNSEPSSDSL) is disordered. The segment covering 323–334 (TQPPPPYQPPQH) has biased composition (pro residues). Positions 349 to 358 (SPNSVTTTMS) are enriched in polar residues.

Interacts with melt.

The protein localises to the cytoplasm. It is found in the nucleus. Transcription factor involved in the regulation of the insulin signaling pathway. Consistently activates both the downstream target Thor\d4EBP and the feedback control target InR. Involved in negative regulation of the cell cycle, modulating cell growth and proliferation. In response to cellular stresses, such as nutrient deprivation or increased levels of reactive oxygen species, foxo is activated and inhibits growth through the action of target genes such as Thor. Foxo activated in the adult fat body can regulate lifespan in adults; an insulin peptide itself may function as one secondary messenger of insulin-regulated aging. Also regulates Lip4, homolog of human acid lipases, thereby acting as a key modulator of lipid metabolism by insulin signaling and integrates insulin responses to glucose and lipid homeostasis. The chain is Forkhead box protein O from Drosophila mojavensis (Fruit fly).